Consider the following 545-residue polypeptide: La-related protein 6B (545 aa).

A compositionally biased stretch (polar residues) spans 1-10 (MADQQTLDSS). 3 disordered regions span residues 1 to 76 (MADQ…IPPP), 105 to 187 (LVPV…DSKT), and 382 to 545 (HQTK…VQAE). Low complexity predominate over residues 23–49 (SHSTSSTTSASSSSDPSLLRSLSLSRL). Positions 61-76 (TTPPLPQPPRMIIPPP) are enriched in pro residues. The segment covering 111–126 (HHPHHRFHQHHHHNRH) has biased composition (basic residues). Residues 154 to 173 (LVSKKNDRRDHSKRESKNDQ) are compositionally biased toward basic and acidic residues. A compositionally biased stretch (polar residues) spans 174 to 185 (VTETGASVSIDS). Residues 187 to 278 (TGLPEDSIQK…RRISPITESA (92 aa)) form the HTH La-type RNA-binding domain. The region spanning 285–383 (RIIVAENLPE…LKVRLMLKHQ (99 aa)) is the RRM domain. Residues 448 to 464 (GQRKGRNRGRGKGRGRG) show a composition bias toward basic residues. Low complexity predominate over residues 465–478 (QPHQNQNQNNNHSH). The segment covering 479–497 (NQNHNHNGRGNHHHHHHHQ) has biased composition (basic residues). A compositionally biased stretch (polar residues) spans 498-509 (VGTQPSNNPMNN). Positions 510-519 (MEQPGMGKQQ) are enriched in low complexity.

It localises to the nucleus. Functionally, transcriptional regulator. The protein is La-related protein 6B (LARP6B) of Arabidopsis thaliana (Mouse-ear cress).